Consider the following 196-residue polypeptide: Endoribonuclease YbeY (196 aa).

3 residues coordinate Zn(2+): His-120, His-124, and His-130.

Belongs to the endoribonuclease YbeY family. Requires Zn(2+) as cofactor.

It is found in the cytoplasm. Functionally, single strand-specific metallo-endoribonuclease involved in late-stage 70S ribosome quality control and in maturation of the 3' terminus of the 16S rRNA. This chain is Endoribonuclease YbeY, found in Corynebacterium diphtheriae (strain ATCC 700971 / NCTC 13129 / Biotype gravis).